Reading from the N-terminus, the 2344-residue chain is Genome polyprotein (2344 aa).

Residues 492–653 (QKVISDLHTM…ESWQATRHGS (162 aa)) enclose the SF3 helicase domain. 522-529 (GAPGIGKT) provides a ligand contact to ATP. Tyr1014 carries the post-translational modification O-(5'-phospho-RNA)-tyrosine. O-UMP-tyrosine; transient is present on Tyr1014. The Peptidase C24 domain occupies 1109 to 1244 (GLPGFMRHNG…SKMCTLIDLT (136 aa)). Active-site for 3CLpro activity residues include His1135, Asp1152, and Cys1212. A RdRp catalytic domain is found at 1495-1619 (SDFLCLDYSK…AMTPMMVSLL (125 aa)). Cysteines 1584 and 1591 form a disulfide. The disordered stretch occupies residues 1771 to 1796 (RTAPQGEAAGTATTASVPGTTTDGMD). The segment covering 1778 to 1794 (AAGTATTASVPGTTTDG) has biased composition (low complexity).

As to quaternary structure, homodimer. In terms of assembly, homomultimer. Interacts with host type II histo-blood group structures antigens at the surface of target cells. Requires Mn(2+) as cofactor. Post-translationally, specific enzymatic cleavages by its own cysteine protease yield mature proteins. The protease cleaves itself from the nascent polyprotein autocatalytically. Precursor p41 can be cleaved by viral 3CLpro into protein p19 and VPg, or cleaved by host protease into protein p23/2 and protein p18. VPg is uridylylated by the polymerase and is covalently attached to the 5'-end of the polyadenylated genomic and subgenomic RNAs. This uridylylated form acts as a nucleotide-peptide primer for the polymerase.

It localises to the host cytoplasm. The protein resides in the host endoplasmic reticulum. It is found in the virion. It catalyses the reaction a ribonucleoside 5'-triphosphate + H2O = a ribonucleoside 5'-diphosphate + phosphate + H(+). The enzyme catalyses Endopeptidase with a preference for cleavage when the P1 position is occupied by Glu-|-Xaa and the P1' position is occupied by Gly-|-Yaa.. It carries out the reaction RNA(n) + a ribonucleoside 5'-triphosphate = RNA(n+1) + diphosphate. Together with NTPase and NS4, initiates the formation of the replication complex. Induces the proliferation of the host smooth ER membranes forming long tubular structures. These remodeled membranes probably form the viral factories that contain the replication complex. In terms of biological role, displays NTPase activity, but no helicase activity. Induces the formation of convoluted membranes derived from the host ER. These remodeled membranes probably form the viral factories that contain the replication complex. Together with NS2 and NS4, initiates the formation of the replication complex. Its function is as follows. Probable key protein responsible for the formation of membrane alterations by the virus. Induces the formation of convoluted membranes derived from the host ER. These remodeled membranes probably form the viral factories that contain the replication complex. Together with NS2 and NTPase, initiates the formation of the replication complex. Functionally, viral genome-linked protein is covalently linked to the 5'-end of the positive-strand, negative-strand genomic RNAs and subgenomic RNA. Acts as a genome-linked replication primer. May recruit ribosome to viral RNA thereby promoting viral proteins translation. Interacts with host translation initiation complex to allow the translation of viral proteins. Processes the polyprotein. 3CLpro-RdRp is first released by autocleavage, then all other proteins are cleaved. May cleave polyadenylate-binding protein thereby inhibiting cellular translation. In terms of biological role, replicates genomic and antigenomic RNA by recognizing replications specific signals. Also transcribes a subgenomic mRNA by initiating RNA synthesis internally on antigenomic RNA. This sgRNA codes for structural proteins. Catalyzes the covalent attachment VPg with viral RNAs. Its function is as follows. Capsid protein VP60 self assembles to form an icosahedral capsid with a T=3 symmetry, about 35 nm in diameter, and consisting of 180 capsid proteins. A smaller form of capsid with a diameter of 23 nm might be capsid proteins assembled as icosahedron with T=1 symmetry. The capsid encapsulate VP2 proteins and genomic or subgenomic RNA. Attaches virion to target cells by binding histo-blood group antigens, inducing endocytosis of the viral particle. Acidification of the endosome induces conformational change of capsid protein thereby injecting virus genomic RNA into host cytoplasm. The polypeptide is Genome polyprotein (Oryctolagus cuniculus (Rabbit)).